A 181-amino-acid polypeptide reads, in one-letter code: MGYPGKNTKQYSSPKRRFEKSRIESERVLAITYGLRNKREIWRATEVLRKHRSGAREVLAMTSSIGEAPKTIARRDELVGTLQRYGLLGPDAAMDNILSLKVEDILERRLQTIVYRKGLARSPKQARQLITHGHIAINGQRVSVPSYMVSIAEEAGIMYYATSSLGDEANGERQRIMNQRA.

One can recognise an S4 RNA-binding domain in the interval 108-180; sequence RRLQTIVYRK…GERQRIMNQR (73 aa).

This sequence belongs to the universal ribosomal protein uS4 family. As to quaternary structure, part of the 30S ribosomal subunit. Contacts protein S5. The interaction surface between S4 and S5 is involved in control of translational fidelity.

One of the primary rRNA binding proteins, it binds directly to 16S rRNA where it nucleates assembly of the body of the 30S subunit. Its function is as follows. With S5 and S12 plays an important role in translational accuracy. This Methanocorpusculum labreanum (strain ATCC 43576 / DSM 4855 / Z) protein is Small ribosomal subunit protein uS4.